A 184-amino-acid polypeptide reads, in one-letter code: Dual-action ribosomal maturation protein DarP (184 aa).

A disordered region spans residues 1–21 (MYKHPDEEWLDEIPGQQENED).

It belongs to the DarP family.

It localises to the cytoplasm. Its function is as follows. Member of a network of 50S ribosomal subunit biogenesis factors which assembles along the 30S-50S interface, preventing incorrect 23S rRNA structures from forming. Promotes peptidyl transferase center (PTC) maturation. The polypeptide is Dual-action ribosomal maturation protein DarP (Edwardsiella ictaluri (strain 93-146)).